Consider the following 139-residue polypeptide: ATP synthase epsilon chain (139 aa).

Belongs to the ATPase epsilon chain family. In terms of assembly, F-type ATPases have 2 components, CF(1) - the catalytic core - and CF(0) - the membrane proton channel. CF(1) has five subunits: alpha(3), beta(3), gamma(1), delta(1), epsilon(1). CF(0) has three main subunits: a, b and c.

The protein localises to the cell membrane. Produces ATP from ADP in the presence of a proton gradient across the membrane. The chain is ATP synthase epsilon chain from Streptococcus pneumoniae serotype 2 (strain D39 / NCTC 7466).